The sequence spans 138 residues: Large ribosomal subunit protein bL17 (138 aa).

It belongs to the bacterial ribosomal protein bL17 family. In terms of assembly, part of the 50S ribosomal subunit. Contacts protein L32.

This Methylorubrum populi (strain ATCC BAA-705 / NCIMB 13946 / BJ001) (Methylobacterium populi) protein is Large ribosomal subunit protein bL17.